The sequence spans 421 residues: UV-B-induced protein At3g17800, chloroplastic (421 aa).

Disordered regions lie at residues 1–40 and 74–95; these read MDAL…RSGS and VRAS…IAPL. The transit peptide at 1–75 directs the protein to the chloroplast; sequence MDALTSSLVR…AKTRRSFVVR (75 aa). The span at 16-28 shows a compositional bias: polar residues; the sequence is SRTSDNGSGSMFL. Over residues 74 to 88 the composition is skewed to low complexity; it reads VRASSASNDASSGSS.

It localises to the plastid. The protein localises to the chloroplast. The polypeptide is UV-B-induced protein At3g17800, chloroplastic (Arabidopsis thaliana (Mouse-ear cress)).